A 999-amino-acid polypeptide reads, in one-letter code: Translation initiation factor IF-2 (999 aa).

Residues Ala50 to Ser407 are disordered. Composition is skewed to pro residues over residues Pro60–Gly89 and Pro96–Ser121. Positions Val136–Gln162 are enriched in low complexity. Residues Gln163–Pro173 are compositionally biased toward basic and acidic residues. Pro residues predominate over residues Arg179–Gly194. Residues Gly213 to Gly222 are compositionally biased toward low complexity. Positions Arg244–Ala266 are enriched in pro residues. Residues Arg275–Gly367 show a composition bias toward gly residues. The segment covering Thr371 to Arg380 has biased composition (basic residues). Positions Ser388–Arg405 are enriched in polar residues. The tr-type G domain maps to Ser490–Glu662. Residues Gly499–Thr506 are G1. Residue Gly499–Thr506 participates in GTP binding. The tract at residues Gly524 to His528 is G2. Positions Asp549–Gly552 are G3. GTP is bound by residues Asp549–His553 and Asn603–Asp606. The segment at Asn603–Asp606 is G4. A G5 region spans residues Ala639 to Lys641.

It belongs to the TRAFAC class translation factor GTPase superfamily. Classic translation factor GTPase family. IF-2 subfamily.

It is found in the cytoplasm. One of the essential components for the initiation of protein synthesis. Protects formylmethionyl-tRNA from spontaneous hydrolysis and promotes its binding to the 30S ribosomal subunits. Also involved in the hydrolysis of GTP during the formation of the 70S ribosomal complex. The chain is Translation initiation factor IF-2 from Salinispora tropica (strain ATCC BAA-916 / DSM 44818 / JCM 13857 / NBRC 105044 / CNB-440).